We begin with the raw amino-acid sequence, 215 residues long: MPKETKETKKYKVEDEFAKAEKTSFVHIPSIKLDTSTLANNFKSLNKNIIPSGKLDYDNDNNENNNNNNENKHIDKRPQLISKKDKRKQKKEAFLQKFNPSLKLQKKKQQDDDESNDGLGMGGVLSSIDLLKDSMKLQPKTKGPKLTNEKRKKMSLKEANQYKNVLSHPSFKANPFATLQEHLANSVALQNQKIKQEQDFKPNNNNNNRNKLKRK.

Disordered stretches follow at residues 49-121 (IIPS…GLGM), 133-157 (DSMK…MSLK), and 189-215 (LQNQ…LKRK).

The protein belongs to the SLX9 family.

The protein resides in the nucleus. It localises to the nucleolus. Functionally, involved in ribosome biogenesis. This chain is Putative ribosome biogenesis protein slx9-like, found in Dictyostelium discoideum (Social amoeba).